A 246-amino-acid chain; its full sequence is Protein-lysine N-methyltransferase EFM6 (246 aa).

S-adenosyl-L-methionine contacts are provided by residues W51, 87-89 (GSG), D115, W143, and A169.

It belongs to the class I-like SAM-binding methyltransferase superfamily. METTL21 family. EFM6 subfamily.

It is found in the cytoplasm. S-adenosyl-L-methionine-dependent protein-lysine N-methyltransferase that methylates elongation factor 1-alpha (TEF1 and TEF2) at 'Lys-390'. The sequence is that of Protein-lysine N-methyltransferase EFM6 from Saccharomyces cerevisiae (strain ATCC 204508 / S288c) (Baker's yeast).